The chain runs to 327 residues: Thiamine-binding periplasmic protein (327 aa).

A signal peptide spans 1-18; that stretch reads MLKKYLPLLLLCAAPAFA. Thiamine contacts are provided by residues 59–60, 161–162, W197, and 215–218; these read DG, ST, and YTTS.

Belongs to the bacterial solute-binding protein 1 family. In terms of assembly, the complex is composed of two ATP-binding proteins (ThiQ), two transmembrane proteins (ThiP) and a solute-binding protein (ThiB).

Its subcellular location is the periplasm. Its function is as follows. Part of the ABC transporter complex ThiBPQ involved in thiamine import. Is also involved in thiamine pyrophosphate transport. The polypeptide is Thiamine-binding periplasmic protein (Salmonella typhimurium (strain LT2 / SGSC1412 / ATCC 700720)).